A 416-amino-acid chain; its full sequence is FBD-associated F-box protein At3g52670 (416 aa).

One can recognise an F-box domain in the interval 9–62 (EDRMNQLPEDLILRILSFLPTELVIATSVLSKQWRSLWKLVPNLEFDSDDYESE). In terms of domain architecture, FBD spans 327–378 (KWNEPKYVPECLLSHLETFVWIRYDWEREEEKEVATYILRNARWLKKGTIST).

The protein is FBD-associated F-box protein At3g52670 of Arabidopsis thaliana (Mouse-ear cress).